Here is an 82-residue protein sequence, read N- to C-terminus: Small ribosomal subunit protein bS16 (82 aa).

It belongs to the bacterial ribosomal protein bS16 family.

The chain is Small ribosomal subunit protein bS16 from Francisella philomiragia subsp. philomiragia (strain ATCC 25017 / CCUG 19701 / FSC 153 / O#319-036).